A 124-amino-acid chain; its full sequence is Small ribosomal subunit protein uS12 (124 aa).

Positions 1-22 are disordered; it reads MATINQLVRKPRKRKVAKSDVP. D89 carries the post-translational modification 3-methylthioaspartic acid. The disordered stretch occupies residues 101-124; the sequence is TLDTQGVQNRKQGRSKYGAKRPKS. A compositionally biased stretch (basic residues) spans 111–124; that stretch reads KQGRSKYGAKRPKS.

The protein belongs to the universal ribosomal protein uS12 family. Part of the 30S ribosomal subunit. Contacts proteins S8 and S17. May interact with IF1 in the 30S initiation complex.

Its function is as follows. With S4 and S5 plays an important role in translational accuracy. Functionally, interacts with and stabilizes bases of the 16S rRNA that are involved in tRNA selection in the A site and with the mRNA backbone. Located at the interface of the 30S and 50S subunits, it traverses the body of the 30S subunit contacting proteins on the other side and probably holding the rRNA structure together. The combined cluster of proteins S8, S12 and S17 appears to hold together the shoulder and platform of the 30S subunit. This chain is Small ribosomal subunit protein uS12, found in Marinobacter nauticus (strain ATCC 700491 / DSM 11845 / VT8) (Marinobacter aquaeolei).